Consider the following 503-residue polypeptide: Probable cytosol aminopeptidase (503 aa).

Residues Lys-270 and Asp-275 each contribute to the Mn(2+) site. Lys-282 is a catalytic residue. Mn(2+)-binding residues include Asp-293, Asp-352, and Glu-354. Arg-356 is a catalytic residue.

The protein belongs to the peptidase M17 family. Requires Mn(2+) as cofactor.

The protein resides in the cytoplasm. The enzyme catalyses Release of an N-terminal amino acid, Xaa-|-Yaa-, in which Xaa is preferably Leu, but may be other amino acids including Pro although not Arg or Lys, and Yaa may be Pro. Amino acid amides and methyl esters are also readily hydrolyzed, but rates on arylamides are exceedingly low.. It catalyses the reaction Release of an N-terminal amino acid, preferentially leucine, but not glutamic or aspartic acids.. Its function is as follows. Presumably involved in the processing and regular turnover of intracellular proteins. Catalyzes the removal of unsubstituted N-terminal amino acids from various peptides. This chain is Probable cytosol aminopeptidase, found in Shigella flexneri.